Reading from the N-terminus, the 295-residue chain is Ribosomal protein L11 methyltransferase (295 aa).

Positions 150, 171, 193, and 232 each coordinate S-adenosyl-L-methionine.

It belongs to the methyltransferase superfamily. PrmA family.

The protein resides in the cytoplasm. The enzyme catalyses L-lysyl-[protein] + 3 S-adenosyl-L-methionine = N(6),N(6),N(6)-trimethyl-L-lysyl-[protein] + 3 S-adenosyl-L-homocysteine + 3 H(+). Its function is as follows. Methylates ribosomal protein L11. In Methylobacillus flagellatus (strain ATCC 51484 / DSM 6875 / VKM B-1610 / KT), this protein is Ribosomal protein L11 methyltransferase.